The primary structure comprises 475 residues: Ribulose bisphosphate carboxylase large chain (475 aa).

The propeptide occupies 1 to 2 (MS). Position 3 is an N-acetylproline (proline 3). The residue at position 14 (lysine 14) is an N6,N6,N6-trimethyllysine. Substrate-binding residues include asparagine 123 and threonine 173. Catalysis depends on lysine 175, which acts as the Proton acceptor. Residue lysine 177 participates in substrate binding. Positions 201, 203, and 204 each coordinate Mg(2+). Position 201 is an N6-carboxylysine (lysine 201). Histidine 294 (proton acceptor) is an active-site residue. Arginine 295, histidine 327, and serine 379 together coordinate substrate.

The protein belongs to the RuBisCO large chain family. Type I subfamily. As to quaternary structure, heterohexadecamer of 8 large chains and 8 small chains; disulfide-linked. The disulfide link is formed within the large subunit homodimers. It depends on Mg(2+) as a cofactor. Post-translationally, the disulfide bond which can form in the large chain dimeric partners within the hexadecamer appears to be associated with oxidative stress and protein turnover.

It localises to the plastid. The protein resides in the chloroplast. The catalysed reaction is 2 (2R)-3-phosphoglycerate + 2 H(+) = D-ribulose 1,5-bisphosphate + CO2 + H2O. It carries out the reaction D-ribulose 1,5-bisphosphate + O2 = 2-phosphoglycolate + (2R)-3-phosphoglycerate + 2 H(+). In terms of biological role, ruBisCO catalyzes two reactions: the carboxylation of D-ribulose 1,5-bisphosphate, the primary event in carbon dioxide fixation, as well as the oxidative fragmentation of the pentose substrate in the photorespiration process. Both reactions occur simultaneously and in competition at the same active site. The protein is Ribulose bisphosphate carboxylase large chain of Amborella trichopoda.